Here is a 116-residue protein sequence, read N- to C-terminus: Putative oxygen-evolving enhancer protein 1 (116 aa).

This sequence belongs to the PsbO family.

The protein resides in the plastid. Its subcellular location is the chloroplast thylakoid membrane. Stabilizes the manganese cluster which is the primary site of water splitting. In Pinus strobus (Eastern white pine), this protein is Putative oxygen-evolving enhancer protein 1.